A 325-amino-acid chain; its full sequence is Polyprenyl transferase mpaA (325 aa).

A run of 3 helical transmembrane segments spans residues 27-47 (MPYYTMMAAVWSTLIAGALKL), 56-76 (VEYILFKAGLCFVHCLLLCGA), and 108-128 (VEALVWMVGQYFLSVKMLDLI). An N-linked (GlcNAc...) asparagine glycan is attached at Asn-131. 6 consecutive transmembrane segments (helical) span residues 134 to 151 (IWGLMLPLTASIMLYPYL), 159 to 179 (VFIYPQYILGLAVAYPSITGW), 192 to 212 (IFTHCTPICLLIFFWCLYFNT), 240 to 260 (LFLAFLGALPLAVIPYVVLKI), 262 to 282 (SPWLWFSWMAVWTVSIVMQIV), and 295 to 315 (IHWDNFLLGLWTTVACIVEVG).

Belongs to the UbiA prenyltransferase family. It depends on Mg(2+) as a cofactor.

The protein resides in the golgi apparatus membrane. The enzyme catalyses 5,7-dihydroxy-4-methylphthalide + (2E,6E)-farnesyl diphosphate = 4-farnesyl-3,5-dihydroxy-6-methylphthalide + diphosphate. It participates in secondary metabolite biosynthesis; terpenoid biosynthesis. Its function is as follows. Polyprenyl transferase; part of the gene cluster that mediates the biosynthesis of mycophenolic acid (MPA), the first isolated antibiotic natural product in the world obtained from a culture of Penicillium brevicompactum in 1893. MpaA is a Golgi apparatus-associated enzyme that catalyzes the prenylation of 5,7-dihydroxy-4,6-dimethylphthalide (DHMP) to yield farnesyl-DHMP (FDHMP). The first step of the pathway is the synthesis of 5-methylorsellinic acid (5MOA) by the cytosolic polyketide synthase mpaC. 5MOA is then converted to the phthalide compound 5,7-dihydroxy-4,6-dimethylphthalide (DHMP) by the endoplasmic reticulum-bound cytochrome P450 monooxygenase mpaDE. MpaDE first catalyzes hydroxylation of 5-MOA to 4,6-dihydroxy-2-(hydroxymethyl)-3-methylbenzoic acid (DHMB). MpaDE then acts as a lactone synthase that catalyzes the ring closure to convert DHMB into DHMP. The next step is the prenylation of DHMP by the Golgi apparatus-associated prenyltransferase mpaA to yield farnesyl-DHMP (FDHMP). The ER-bound oxygenase mpaB then mediates the oxidative cleavage the C19-C20 double bond in FDHMP to yield FDHMP-3C via a mycophenolic aldehyde intermediate. The O-methyltransferase mpaG catalyzes the methylation of FDHMP-3C to yield MFDHMP-3C. After the cytosolic methylation of FDHMP-3C, MFDHMP-3C enters into peroxisomes probably via free diffusion due to its low molecular weight. Upon a peroxisomal CoA ligation reaction, catalyzed by a beta-oxidation component enzyme acyl-CoA ligase ACL891, MFDHMP-3C-CoA would then be restricted to peroxisomes for the following beta-oxidation pathway steps. The peroxisomal beta-oxidation machinery than converts MFDHMP-3C-CoA into MPA_CoA, via a beta-oxidation chain-shortening process. Finally mpaH acts as a peroxisomal acyl-CoA hydrolase with high substrate specificity toward MPA-CoA to release the final product MPA. The chain is Polyprenyl transferase mpaA from Penicillium roqueforti (strain FM164).